Here is a 137-residue protein sequence, read N- to C-terminus: Large ribosomal subunit protein uL16 (137 aa).

The protein belongs to the universal ribosomal protein uL16 family. As to quaternary structure, part of the 50S ribosomal subunit.

Binds 23S rRNA and is also seen to make contacts with the A and possibly P site tRNAs. The chain is Large ribosomal subunit protein uL16 from Psychrobacter sp. (strain PRwf-1).